Reading from the N-terminus, the 119-residue chain is Protein TusC (119 aa).

Belongs to the DsrF/TusC family. As to quaternary structure, heterohexamer, formed by a dimer of trimers. The hexameric TusBCD complex contains 2 copies each of TusB, TusC and TusD. The TusBCD complex interacts with TusE.

It localises to the cytoplasm. Its function is as follows. Part of a sulfur-relay system required for 2-thiolation of 5-methylaminomethyl-2-thiouridine (mnm(5)s(2)U) at tRNA wobble positions. The protein is Protein TusC of Escherichia fergusonii (strain ATCC 35469 / DSM 13698 / CCUG 18766 / IAM 14443 / JCM 21226 / LMG 7866 / NBRC 102419 / NCTC 12128 / CDC 0568-73).